Reading from the N-terminus, the 103-residue chain is Small ribosomal subunit protein uS10 (103 aa).

This sequence belongs to the universal ribosomal protein uS10 family. In terms of assembly, part of the 30S ribosomal subunit.

Functionally, involved in the binding of tRNA to the ribosomes. This is Small ribosomal subunit protein uS10 from Cellvibrio japonicus (strain Ueda107) (Pseudomonas fluorescens subsp. cellulosa).